A 90-amino-acid chain; its full sequence is Putative transcript Y 12 protein (90 aa).

The chain is Putative transcript Y 12 protein (TTTY12) from Homo sapiens (Human).